A 246-amino-acid polypeptide reads, in one-letter code: UDP-2,3-diacylglucosamine hydrolase (246 aa).

Residues aspartate 8, histidine 10, aspartate 41, asparagine 79, and histidine 114 each contribute to the Mn(2+) site. A substrate-binding site is contributed by 79–80 (NR). Residues aspartate 122, serine 160, lysine 164, lysine 167, and histidine 195 each coordinate substrate. Mn(2+) contacts are provided by histidine 195 and histidine 197.

This sequence belongs to the LpxH family. It depends on Mn(2+) as a cofactor.

The protein resides in the cell inner membrane. It catalyses the reaction UDP-2-N,3-O-bis[(3R)-3-hydroxytetradecanoyl]-alpha-D-glucosamine + H2O = 2-N,3-O-bis[(3R)-3-hydroxytetradecanoyl]-alpha-D-glucosaminyl 1-phosphate + UMP + 2 H(+). The protein operates within glycolipid biosynthesis; lipid IV(A) biosynthesis; lipid IV(A) from (3R)-3-hydroxytetradecanoyl-[acyl-carrier-protein] and UDP-N-acetyl-alpha-D-glucosamine: step 4/6. Its function is as follows. Hydrolyzes the pyrophosphate bond of UDP-2,3-diacylglucosamine to yield 2,3-diacylglucosamine 1-phosphate (lipid X) and UMP by catalyzing the attack of water at the alpha-P atom. Involved in the biosynthesis of lipid A, a phosphorylated glycolipid that anchors the lipopolysaccharide to the outer membrane of the cell. This is UDP-2,3-diacylglucosamine hydrolase from Tolumonas auensis (strain DSM 9187 / NBRC 110442 / TA 4).